A 599-amino-acid chain; its full sequence is Aspartate--tRNA(Asp/Asn) ligase (599 aa).

Residue Glu-180 participates in L-aspartate binding. Residues 204-207 are aspartate; the sequence is QLLK. Arg-226 contacts L-aspartate. ATP contacts are provided by residues 226 to 228 and Gln-235; that span reads RDE. His-457 serves as a coordination point for L-aspartate. Glu-491 is a binding site for ATP. An L-aspartate-binding site is contributed by Arg-498. 543-546 provides a ligand contact to ATP; the sequence is GWDR. Residues 565–599 form a disordered region; the sequence is KAGGGRDPLTGAPAPISDEQRAETGVDYDPDADEN. The segment covering 590–599 has biased composition (acidic residues); that stretch reads VDYDPDADEN.

The protein belongs to the class-II aminoacyl-tRNA synthetase family. Type 1 subfamily. In terms of assembly, homodimer.

Its subcellular location is the cytoplasm. The catalysed reaction is tRNA(Asx) + L-aspartate + ATP = L-aspartyl-tRNA(Asx) + AMP + diphosphate. Functionally, aspartyl-tRNA synthetase with relaxed tRNA specificity since it is able to aspartylate not only its cognate tRNA(Asp) but also tRNA(Asn). Reaction proceeds in two steps: L-aspartate is first activated by ATP to form Asp-AMP and then transferred to the acceptor end of tRNA(Asp/Asn). In Bifidobacterium longum (strain NCC 2705), this protein is Aspartate--tRNA(Asp/Asn) ligase.